Consider the following 51-residue polypeptide: Sperm protamine P1 (51 aa).

Over residues 1-13 (MARYRCCRSQSRS) the composition is skewed to low complexity. Positions 1–30 (MARYRCCRSQSRSRYYRQRQRSRRRRRRSC) are disordered. Residues 14-30 (RYYRQRQRSRRRRRRSC) show a composition bias toward basic residues. Cys40 and Cys48 are joined by a disulfide.

The protein belongs to the protamine P1 family. In terms of assembly, cross-linked by interchain disulfide bonds around the DNA-helix. Post-translationally, phosphorylated by SRPK1. As to expression, testis.

The protein localises to the nucleus. The protein resides in the chromosome. Its function is as follows. Protamines substitute for histones in the chromatin of sperm during the haploid phase of spermatogenesis. They compact sperm DNA into a highly condensed, stable and inactive complex. This is Sperm protamine P1 (PRM1) from Homo sapiens (Human).